The chain runs to 78 residues: U29-theraphotoxin-Cg1a (78 aa).

Residues 1–19 (MRYQTVFWILLIALCTVNP) form the signal peptide. Intrachain disulfides connect Cys42–Cys56, Cys49–Cys60, Cys55–Cys77, and Cys67–Cys73.

The protein belongs to the neurotoxin 13 (insecticidal toxin ABC) family. 03 (JZTX-59) subfamily. As to expression, expressed by the venom gland.

Its subcellular location is the secreted. In terms of biological role, probable ion channel inhibitor. This is U29-theraphotoxin-Cg1a from Chilobrachys guangxiensis (Chinese earth tiger tarantula).